The sequence spans 432 residues: Vacuolar protein sorting-associated protein 38 (432 aa).

Asparagine 20 carries an N-linked (GlcNAc...) asparagine glycan. The stretch at 216 to 287 (LDTYQENIKM…KEAIEKLQKK (72 aa)) forms a coiled coil. The chain crosses the membrane as a helical span at residues 348–365 (IINAMLGFYSLFIVIYSY).

This sequence belongs to the VPS38 family. As to quaternary structure, component of the VPS34 PI3-kinase complex II composed of VPS15, VPS30, VPS34 and VPS38.

It localises to the golgi apparatus. The protein localises to the trans-Golgi network membrane. The protein resides in the endosome membrane. In terms of biological role, involved in endosome-to-Golgi retrograde transport as part of the VPS34 PI3-kinase complex II. This complex is required for the endosome-to-Golgi retrieval of PEP1 and KEX2, and the recruitment of VPS5 and VPS7, two components of the retromer complex, to endosomal membranes (probably through generating a specific pool of phosphatidylinositol 3-phosphate allowing the recruitment of the retromer complex proteins to the endosome). Mediates the interaction between VPS30 and the VPS34-VPS15 core complex, leading to the recruitment of VPS30 to the membrane. This is Vacuolar protein sorting-associated protein 38 from Candida glabrata (strain ATCC 2001 / BCRC 20586 / JCM 3761 / NBRC 0622 / NRRL Y-65 / CBS 138) (Yeast).